The sequence spans 370 residues: D-alanine--D-alanine ligase (370 aa).

An ATP-grasp domain is found at Lys144 to Asp352. Glu177–Glu232 contacts ATP. Residues Asp306, Glu319, and Asn321 each contribute to the Mg(2+) site.

Belongs to the D-alanine--D-alanine ligase family. Mg(2+) is required as a cofactor. It depends on Mn(2+) as a cofactor.

The protein localises to the cytoplasm. It carries out the reaction 2 D-alanine + ATP = D-alanyl-D-alanine + ADP + phosphate + H(+). The protein operates within cell wall biogenesis; peptidoglycan biosynthesis. Its function is as follows. Cell wall formation. This chain is D-alanine--D-alanine ligase, found in Listeria monocytogenes serovar 1/2a (strain ATCC BAA-679 / EGD-e).